The sequence spans 970 residues: uncharacterized protein (970 aa).

Residues 942–970 are disordered; it reads QLSFEEDGWTESEPRPVRREAHVRAKERH. Residues 953–970 show a composition bias toward basic and acidic residues; that stretch reads SEPRPVRREAHVRAKERH.

This is an uncharacterized protein from Frog virus 3 (isolate Goorha) (FV-3).